The sequence spans 409 residues: Nucleoprotein (409 aa).

5 disordered regions span residues 1-32, 44-69, 121-145, 164-195, and 238-259; these read MASG…SSGN, LNSP…QQHG, ADVK…LRFS, RSGR…SEGD, and VDQV…DKMN. Residues 15 to 31 show a composition bias toward low complexity; that stretch reads PVIKLGGPKPPKVGSSG. Residues 29–160 are RNA-binding; it reads SSGNASWFQA…GNFRWDFIPL (132 aa). In terms of domain architecture, CoV N NTD spans 31–156; sequence GNASWFQAIK…GGPDGNFRWD (126 aa). Residues 164–179 show a composition bias toward low complexity; sequence RSGRSTAASSAASSRA. Composition is skewed to basic and acidic residues over residues 180–192 and 247–259; these read PSRD…RSGS and KGKE…DKMN. Phosphoserine; by host occurs at positions 190 and 192. In terms of domain architecture, CoV N CTD spans 215-331; it reads TKAKADEMAH…QCVDGVGTRP (117 aa). Residues 226 to 333 are dimerization; that stretch reads RYCKRTIPPG…VDGVGTRPKD (108 aa). Cysteines 320 and 323 form a disulfide. The disordered stretch occupies residues 326 to 409; the sequence is GVGTRPKDDE…GDSALGENEL (84 aa). The span at 341 to 358 shows a compositional bias: low complexity; it reads RSSSRPATRTSSPALRQQ. The span at 368-384 shows a compositional bias: basic and acidic residues; it reads KQDDEVDKALTSDEERN. Phosphothreonine; by host is present on T378. S379 carries the phosphoserine; by host modification.

The protein belongs to the gammacoronavirus nucleocapsid protein family. Homooligomer. Both monomeric and oligomeric forms interact with RNA. Interacts with protein M. Interacts with NSP3; this interaction serves to tether the genome to the newly translated replicase-transcriptase complex at a very early stage of infection. Post-translationally, ADP-ribosylated. The ADP-ribosylation is retained in the virion during infection. Phosphorylated on serine and threonine residues.

It is found in the virion. The protein localises to the host endoplasmic reticulum-Golgi intermediate compartment. Its subcellular location is the host Golgi apparatus. Its function is as follows. Packages the positive strand viral genome RNA into a helical ribonucleocapsid (RNP) and plays a fundamental role during virion assembly through its interactions with the viral genome and membrane protein M. Plays an important role in enhancing the efficiency of subgenomic viral RNA transcription as well as viral replication. This is Nucleoprotein from Gallus gallus (Chicken).